The chain runs to 248 residues: GPN-loop GTPase PAB0955 (248 aa).

10 to 15 (GSGKTT) contributes to the GTP binding site. Positions 65–67 (GPN) match the Gly-Pro-Asn (GPN)-loop; involved in dimer interface motif. Residues 165-168 (NKVD) and A224 each bind GTP.

This sequence belongs to the GPN-loop GTPase family. In terms of assembly, homodimer. Interacts with DNA topoisomerase VI subunit B (top6B), DNA primase DnaG and RF-C.

Its function is as follows. Small GTPase that may be involved in genome maintenance. Has weak intrinsic GTPase activity but displays no ATPase activity. The sequence is that of GPN-loop GTPase PAB0955 from Pyrococcus abyssi (strain GE5 / Orsay).